The primary structure comprises 219 residues: Large ribosomal subunit protein uL3 (219 aa).

Residues 140-163 are disordered; sequence SASHGAHRNHRKPGSIGASSTPSR.

The protein belongs to the universal ribosomal protein uL3 family. In terms of assembly, part of the 50S ribosomal subunit. Forms a cluster with proteins L14 and L19.

One of the primary rRNA binding proteins, it binds directly near the 3'-end of the 23S rRNA, where it nucleates assembly of the 50S subunit. This is Large ribosomal subunit protein uL3 from Leifsonia xyli subsp. xyli (strain CTCB07).